The following is a 93-amino-acid chain: DNA-directed RNA polymerase subunit omega (93 aa).

This sequence belongs to the RNA polymerase subunit omega family. The RNAP catalytic core consists of 2 alpha, 1 beta, 1 beta' and 1 omega subunit. When a sigma factor is associated with the core the holoenzyme is formed, which can initiate transcription.

It carries out the reaction RNA(n) + a ribonucleoside 5'-triphosphate = RNA(n+1) + diphosphate. Promotes RNA polymerase assembly. Latches the N- and C-terminal regions of the beta' subunit thereby facilitating its interaction with the beta and alpha subunits. The chain is DNA-directed RNA polymerase subunit omega from Shewanella loihica (strain ATCC BAA-1088 / PV-4).